Consider the following 583-residue polypeptide: J protein JJJ2 (583 aa).

Positions 11–79 (RTTYYSILGL…KLRYDRDLKI (69 aa)) constitute a J domain. Positions 215-224 (SYSEDPNSCL) are enriched in polar residues. Residues 215-313 (SYSEDPNSCL…SGSHDSNLQS (99 aa)) are disordered. Residue Ser-229 is modified to Phosphoserine. The span at 240-252 (QQQQQQQQQQQQQ) shows a compositional bias: low complexity. Positions 262–281 (SPDEEKKNNKEPKRESRVSP) are enriched in basic and acidic residues. The segment covering 298–313 (KTSTFSSGSHDSNLQS) has biased composition (polar residues).

The protein resides in the cytoplasm. It localises to the nucleus. This is J protein JJJ2 (JJJ2) from Saccharomyces cerevisiae (strain ATCC 204508 / S288c) (Baker's yeast).